Here is a 110-residue protein sequence, read N- to C-terminus: Bowman-Birk type proteinase inhibitor (110 aa).

The signal sequence occupies residues 1-28 (MVLMNKKAIMKLALMLFLLGFTANVVDA). Residues 29-42 (RFDSTSFITQVLSN) constitute a propeptide that is removed on maturation. Intrachain disulfides connect Cys50–Cys103, Cys51–Cys66, Cys54–Cys99, Cys56–Cys64, Cys73–Cys80, Cys77–Cys92, and Cys82–Cys90.

In terms of assembly, monomer.

Inhibitor of trypsin and of chymotrypsin. The sequence is that of Bowman-Birk type proteinase inhibitor from Lens culinaris (Lentil).